Here is a 218-residue protein sequence, read N- to C-terminus: Peptidyl-prolyl cis-trans isomerase FKBP7 (218 aa).

The signal sequence occupies residues Met-1–Ala-19. Asn-41 and Asn-128 each carry an N-linked (GlcNAc...) asparagine glycan. One can recognise a PPIase FKBP-type domain in the interval Gly-49–Thr-141. 2 EF-hand domains span residues Thr-141–Lys-176 and Tyr-185–Leu-218. Residues Asp-154, Asp-156, Asp-158, Gln-160, Glu-165, Asp-198, Asn-200, Asp-202, and Glu-209 each contribute to the Ca(2+) site. The tract at residues Asn-197 to Leu-218 is disordered. A Prevents secretion from ER motif is present at residues His-215–Leu-218.

In terms of processing, glycosylated. Expressed at highest levels in heart, lung and testis. Weakly expressed in kidney and lymph node. Little or no expression detected in brain, thymus, spleen and liver.

It is found in the endoplasmic reticulum lumen. The enzyme catalyses [protein]-peptidylproline (omega=180) = [protein]-peptidylproline (omega=0). Its function is as follows. PPIases accelerate the folding of proteins during protein synthesis. The protein is Peptidyl-prolyl cis-trans isomerase FKBP7 (Fkbp7) of Mus musculus (Mouse).